The chain runs to 438 residues: Myosin light chain kinase, smooth muscle (438 aa).

The region spanning 1–241 (FRLVEKKTGK…CTQCLQHPWL (241 aa)) is the Protein kinase domain. Residue Lys-15 participates in ATP binding. Position 97 is a phosphotyrosine; by ABL1 (Tyr-97). Asp-107 serves as the catalytic Proton acceptor. Position 157 is a phosphotyrosine; by ABL1 (Tyr-157). Residues 233-296 (TQCLQHPWLX…SGLSGRKSST (64 aa)) form a calmodulin-binding region. Phosphoserine occurs at positions 281, 282, 294, 295, and 298. A telokin region spans residues 283 to 438 (MAMISGLSGR…GEGGEEEEEE (156 aa)). The segment at 289-309 (LSGRKSSTGSPTSPLNAEKLE) is disordered. Over residues 292–303 (RKSSTGSPTSPL) the composition is skewed to polar residues. A Phosphothreonine modification is found at Thr-300. Ser-301 is modified (phosphoserine). The Ig-like C2-type domain occupies 331–420 (PYFSKTIRDL…GEATCTAELI (90 aa)). Cys-352 and Cys-404 are disulfide-bonded.

It belongs to the protein kinase superfamily. CAMK Ser/Thr protein kinase family. As to quaternary structure, all isoforms including Telokin bind calmodulin. Interacts with SVIL. Interacts with CTTN; this interaction is reduced during thrombin-induced endothelial cell (EC) contraction but is promoted by the barrier-protective agonist sphingosine 1-phosphate (S1P) within lamellipodia. A complex made of ABL1, CTTN and MYLK regulates cortical actin-based cytoskeletal rearrangement critical to sphingosine 1-phosphate (S1P)-mediated endothelial cell (EC) barrier enhancement. Binds to NAA10/ARD1 and PTK2B/PYK2. Requires Mg(2+) as cofactor. Ca(2+) serves as cofactor. The C-terminus is deglutamylated by AGTPBP1/CCP1, AGBL1/CCP4 and AGBL4/CCP6, leading to the formation of Myosin light chain kinase, smooth muscle, deglutamylated form. The consequences of C-terminal deglutamylation are unknown. Post-translationally, can probably be down-regulated by phosphorylation. Tyrosine phosphorylation by ABL1 increases kinase activity, reverses MLCK-mediated inhibition of Arp2/3-mediated actin polymerization, and enhances CTTN-binding. Phosphorylation by SRC promotes CTTN binding.

The protein localises to the cytoplasm. It localises to the cell projection. Its subcellular location is the lamellipodium. The protein resides in the cleavage furrow. It is found in the cytoskeleton. The protein localises to the stress fiber. It carries out the reaction L-seryl-[myosin light chain] + ATP = O-phospho-L-seryl-[myosin light chain] + ADP + H(+). It catalyses the reaction L-threonyl-[myosin light chain] + ATP = O-phospho-L-threonyl-[myosin light chain] + ADP + H(+). Calcium/calmodulin-dependent myosin light chain kinase implicated in smooth muscle contraction via phosphorylation of myosin light chains (MLC). Also regulates actin-myosin interaction through a non-kinase activity. Phosphorylates PTK2B/PYK2 and myosin light-chains. Involved in the inflammatory response (e.g. apoptosis, vascular permeability, leukocyte diapedesis), cell motility and morphology, airway hyperreactivity and other activities relevant to asthma. Required for tonic airway smooth muscle contraction that is necessary for physiological and asthmatic airway resistance. Necessary for gastrointestinal motility. Implicated in the regulation of endothelial as well as vascular permeability, probably via the regulation of cytoskeletal rearrangements. In the nervous system it has been shown to control the growth initiation of astrocytic processes in culture and to participate in transmitter release at synapses formed between cultured sympathetic ganglion cells. Critical participant in signaling sequences that result in fibroblast apoptosis. Plays a role in the regulation of epithelial cell survival. Required for epithelial wound healing, especially during actomyosin ring contraction during purse-string wound closure. Mediates RhoA-dependent membrane blebbing. Triggers TRPC5 channel activity in a calcium-dependent signaling, by inducing its subcellular localization at the plasma membrane. Promotes cell migration (including tumor cells) and tumor metastasis. PTK2B/PYK2 activation by phosphorylation mediates ITGB2 activation and is thus essential to trigger neutrophil transmigration during acute lung injury (ALI). May regulate optic nerve head astrocyte migration. Probably involved in mitotic cytoskeletal regulation. Regulates tight junction probably by modulating ZO-1 exchange in the perijunctional actomyosin ring. Mediates burn-induced microvascular barrier injury; triggers endothelial contraction in the development of microvascular hyperpermeability by phosphorylating MLC. Essential for intestinal barrier dysfunction. Mediates Giardia spp.-mediated reduced epithelial barrier function during giardiasis intestinal infection via reorganization of cytoskeletal F-actin and tight junctional ZO-1. Necessary for hypotonicity-induced Ca(2+) entry and subsequent activation of volume-sensitive organic osmolyte/anion channels (VSOAC) in cervical cancer cells. This is Myosin light chain kinase, smooth muscle (MYLK) from Ovis aries (Sheep).